The following is a 610-amino-acid chain: MSRSPLNPSQLRSVGSQDALAPLPPPAPQNPSTHSWDPLCGSLPWGLSCLLALQHVLVMASLLCVSHLLLLCSLSPGGLSYSPSQLLASSFFSCGMSTILQTWMGSRLPLVQAPSLEFLIPALVLTSQKLPRAIQTPGNSSLMLHLCRGPSCHGLGHWNTSLQEVSGAVVVSGLLQGMMGLLGSPGHVFPHCGPLVLAPSLVVAGLSAHREVAQFCFTHWGLALLVILLMVVCSQHLGSCQFHVCPWRRASTSSTHTPLPVFRLLSVLIPVACVWIVSAFVGFSVIPQELSAPTKAPWIWLPHPGEWNWPLLTPRALAAGISMALAASTSSLGCYALCGRLLHLPPPPPHACSRGLSLEGLGSVLAGLLGSPMGTASSFPNVGKVGLIQAGSQQVAHLVGLLCVGLGLSPRLAQLLTTIPLPVVGGVLGVTQAVVLSAGFSSFYLADIDSGRNIFIVGFSIFMALLLPRWFREAPVLFSTGWSPLDVLLHSLLTQPIFLAGLSGFLLENTIPGTQLERGLGQGLPSPFTAQEARMPQKPREKAAQVYRLPFPIQNLCPCIPQPLHCLCPLPEDPGDEEGGSSEPEEMADLLPGSGEPCPESSREGFRSQK.

Residues 1-16 (MSRSPLNPSQLRSVGS) are compositionally biased toward polar residues. Residues 1 to 32 (MSRSPLNPSQLRSVGSQDALAPLPPPAPQNPS) form a disordered region. Topologically, residues 1 to 49 (MSRSPLNPSQLRSVGSQDALAPLPPPAPQNPSTHSWDPLCGSLPWGLSC) are cytoplasmic. The helical transmembrane segment at 50–70 (LLALQHVLVMASLLCVSHLLL) threads the bilayer. At 71 to 85 (LCSLSPGGLSYSPSQ) the chain is on the extracellular side. A helical transmembrane segment spans residues 86-106 (LLASSFFSCGMSTILQTWMGS). The Cytoplasmic segment spans residues 107-164 (RLPLVQAPSLEFLIPALVLTSQKLPRAIQTPGNSSLMLHLCRGPSCHGLGHWNTSLQE). A helical membrane pass occupies residues 165–185 (VSGAVVVSGLLQGMMGLLGSP). Over 186 to 187 (GH) the chain is Extracellular. The helical transmembrane segment at 188-208 (VFPHCGPLVLAPSLVVAGLSA) threads the bilayer. Residues 209-211 (HRE) are Cytoplasmic-facing. A helical membrane pass occupies residues 212-232 (VAQFCFTHWGLALLVILLMVV). Residues 233–266 (CSQHLGSCQFHVCPWRRASTSSTHTPLPVFRLLS) lie on the Extracellular side of the membrane. Residues 267-287 (VLIPVACVWIVSAFVGFSVIP) form a helical membrane-spanning segment. Topologically, residues 288–316 (QELSAPTKAPWIWLPHPGEWNWPLLTPRA) are cytoplasmic. The chain crosses the membrane as a helical span at residues 317–337 (LAAGISMALAASTSSLGCYAL). Residues 338–355 (CGRLLHLPPPPPHACSRG) lie on the Extracellular side of the membrane. The chain crosses the membrane as a helical span at residues 356 to 376 (LSLEGLGSVLAGLLGSPMGTA). Topologically, residues 377–394 (SSFPNVGKVGLIQAGSQQ) are cytoplasmic. Residues 395 to 414 (VAHLVGLLCVGLGLSPRLAQ) form a helical membrane-spanning segment. Residues 415 to 423 (LLTTIPLPV) are Extracellular-facing. Residues 424-446 (VGGVLGVTQAVVLSAGFSSFYLA) traverse the membrane as a helical segment. Topologically, residues 447-452 (DIDSGR) are cytoplasmic. The chain crosses the membrane as a helical span at residues 453–472 (NIFIVGFSIFMALLLPRWFR). The Extracellular segment spans residues 473–486 (EAPVLFSTGWSPLD). The chain crosses the membrane as a helical span at residues 487–507 (VLLHSLLTQPIFLAGLSGFLL). The Cytoplasmic segment spans residues 508–610 (ENTIPGTQLE…SSREGFRSQK (103 aa)). The segment at 571-610 (PEDPGDEEGGSSEPEEMADLLPGSGEPCPESSREGFRSQK) is disordered. Residues 573–588 (DPGDEEGGSSEPEEMA) are compositionally biased toward acidic residues. Positions 601-610 (SSREGFRSQK) are enriched in basic and acidic residues.

This sequence belongs to the nucleobase:cation symporter-2 (NCS2) (TC 2.A.40) family.

It localises to the membrane. It catalyses the reaction hypoxanthine(out) + Na(+)(out) = hypoxanthine(in) + Na(+)(in). Its function is as follows. Acts as a sodium-dependent hypoxanthine transporter. May show xanthine-hypoxanthine exchange activity. This is Solute carrier family 23 member 3 (SLC23A3) from Homo sapiens (Human).